We begin with the raw amino-acid sequence, 212 residues long: Interleukin-6 (212 aa).

Residues 1–29 (MNSLSTSAFSPVAFSLGLLLVMATAFPTP) form the signal peptide. A disulfide bridge links Cys72 with Cys78. Phosphoserine is present on Ser81. Cys101 and Cys111 are disulfide-bonded. Positions 156–175 (QKGKNPDKATTPNPTTNAGL) are disordered. Residues 163–175 (KATTPNPTTNAGL) show a composition bias toward polar residues.

The protein belongs to the IL-6 superfamily. As to quaternary structure, component of a hexamer of two molecules each of IL6, IL6R and IL6ST; first binds to IL6R to associate with the signaling subunit IL6ST. Interacts with IL6R (via the N-terminal ectodomain); this interaction may be affected by IL6R-binding with SORL1, hence decreasing IL6 cis signaling. Interacts with SORL1 (via the N-terminal ectodomain); this interaction leads to IL6 internalization and lysosomal degradation. May form a trimeric complex with the soluble SORL1 ectodomain and soluble IL6R receptor; this interaction might stabilize circulating IL6, hence promoting IL6 trans signaling.

It localises to the secreted. Cytokine with a wide variety of biological functions in immunity, tissue regeneration, and metabolism. Binds to IL6R, then the complex associates to the signaling subunit IL6ST/gp130 to trigger the intracellular IL6-signaling pathway. The interaction with the membrane-bound IL6R and IL6ST stimulates 'classic signaling', whereas the binding of IL6 and soluble IL6R to IL6ST stimulates 'trans-signaling'. Alternatively, 'cluster signaling' occurs when membrane-bound IL6:IL6R complexes on transmitter cells activate IL6ST receptors on neighboring receiver cells. In terms of biological role, IL6 is a potent inducer of the acute phase response. Rapid production of IL6 contributes to host defense during infection and tissue injury, but excessive IL6 synthesis is involved in disease pathology. In the innate immune response, is synthesized by myeloid cells, such as macrophages and dendritic cells, upon recognition of pathogens through toll-like receptors (TLRs) at the site of infection or tissue injury. In the adaptive immune response, is required for the differentiation of B cells into immunoglobulin-secreting cells. Plays a major role in the differentiation of CD4(+) T cell subsets. Essential factor for the development of T follicular helper (Tfh) cells that are required for the induction of germinal-center formation. Required to drive naive CD4(+) T cells to the Th17 lineage. Also required for proliferation of myeloma cells and the survival of plasmablast cells. Functionally, acts as an essential factor in bone homeostasis and on vessels directly or indirectly by induction of VEGF, resulting in increased angiogenesis activity and vascular permeability. Induces, through 'trans-signaling' and synergistically with IL1B and TNF, the production of VEGF. Involved in metabolic controls, is discharged into the bloodstream after muscle contraction increasing lipolysis and improving insulin resistance. 'Trans-signaling' in central nervous system also regulates energy and glucose homeostasis. Mediates, through GLP-1, crosstalk between insulin-sensitive tissues, intestinal L cells and pancreatic islets to adapt to changes in insulin demand. Also acts as a myokine. Plays a protective role during liver injury, being required for maintenance of tissue regeneration. Also has a pivotal role in iron metabolism by regulating HAMP/hepcidin expression upon inflammation or bacterial infection. Through activation of IL6ST-YAP-NOTCH pathway, induces inflammation-induced epithelial regeneration. The chain is Interleukin-6 (IL6) from Sus scrofa (Pig).